The primary structure comprises 341 residues: Homeobox protein mls-2 (341 aa).

Disordered regions lie at residues 1 to 78 (MPTS…DSTN) and 139 to 209 (SNPD…TVFS). Residues 64 to 78 (TTQSSPSASSEDSTN) show a composition bias toward polar residues. Residues 153–166 (KDEKSEGKDGETRD) show a composition bias toward basic and acidic residues. The segment at residues 201–260 (KKKTRTVFSRSQVSQLEMMFECKRYLSSQERSNLAQKLHLTETQVKIWFQNRRNKFKRQA) is a DNA-binding region (homeobox).

This sequence belongs to the HMX homeobox family. In terms of tissue distribution, expressed in a subset of head neurons, including AIM and ASK (at protein level).

Its subcellular location is the nucleus. Transcription factor that binds to the promoter of target genes. Regulates fate specification and/or differentiation of multiple cell types arising from the embryonic mesodermal (M) lineage and the ABp(l/r)paa precursors. In the postembryonic M lineage, regulates cleavage orientation, cell proliferation and cell fate specification. Regulates hlh-1 expression to specify coelomocyte fate in the mesodermal (M) lineage. In AWC neurons, initiates expression of ceh-36, leading to the expression of terminal differentiation genes. Regulates ventral cephalic sheath (CEPsh) glia differentiation and expression of transcription factor hlh-17 in CEPsh glia. Promotes terminal differentiation and morphogenesis of the epithelial duct and pore cells. In the duct cell, cooperates with the EGF-Ras-ERK pathway in turning on the terminal differentiation gene lin-48. This is Homeobox protein mls-2 from Caenorhabditis elegans.